Here is a 365-residue protein sequence, read N- to C-terminus: Phosphatidylcholine:ceramide cholinephosphotransferase 2 (365 aa).

Residues 1 to 14 (MDIIETAKLEEHLE) show a composition bias toward basic and acidic residues. The segment at 1-52 (MDIIETAKLEEHLENQPSDPTNTYARPAEPVEEENKNGNGKPKSLSSGLRKG) is disordered. The segment covering 15 to 24 (NQPSDPTNTY) has biased composition (polar residues). Transmembrane regions (helical) follow at residues 80–100 (GIAFIYAVFNLVLTTVMITVV), 128–148 (FSVSEINGIILVGLWITQWLF), 159–179 (FCFIIGTLYLYRCITMYVTTL), and 206–226 (LISGGGLSITGSHILCGDFLF). Histidine 229 is a catalytic residue. A helical membrane pass occupies residues 248-268 (FWWYHLICWLLSAAGIICILV). Residues histidine 272 and aspartate 276 contribute to the active site. A helical membrane pass occupies residues 275–295 (IDVIIAYYITTRLFWWYHSMA). At 296–365 (NEKNLKVSSQ…KIGEDNEKST (70 aa)) the chain is on the cytoplasmic side. 4 S-palmitoyl cysteine lipidation sites follow: cysteine 331, cysteine 332, cysteine 343, and cysteine 348.

The protein belongs to the sphingomyelin synthase family. Post-translationally, palmitoylated on Cys-331, Cys-332, Cys-343 and Cys-348; which plays an important role in plasma membrane localization. As to expression, brain, heart, kidney, liver, muscle and stomach. Also expressed in a number of cell lines such as carcinoma HeLa cells, hepatoma Hep-G2 cells, and colon carcinoma Caco-2 cells.

Its subcellular location is the cell membrane. It is found in the golgi apparatus membrane. It catalyses the reaction an N-acylsphing-4-enine + a 1,2-diacyl-sn-glycero-3-phosphocholine = a sphingomyelin + a 1,2-diacyl-sn-glycerol. It carries out the reaction an N-acylsphinganine + a 1,2-diacyl-sn-glycero-3-phosphocholine = an N-acylsphinganine-1-phosphocholine + a 1,2-diacyl-sn-glycerol. The enzyme catalyses an N-acyl-(4R)-4-hydroxysphinganine + a 1,2-diacyl-sn-glycero-3-phosphocholine = an N-acyl-(4R)-4-hydroxysphinganine-phosphocholine + a 1,2-diacyl-sn-glycerol. The catalysed reaction is an N-acylsphinganine + a 1,2-diacyl-sn-glycero-3-phosphoethanolamine = an N-acylsphinganine-1-phosphoethanolamine + a 1,2-diacyl-sn-glycerol. It catalyses the reaction an N-acyl-(4R)-4-hydroxysphinganine + a 1,2-diacyl-sn-glycero-3-phosphoethanolamine = an N-acyl-(4R)-4-hydroxysphinganine-1-phosphoethanolamine + a 1,2-diacyl-sn-glycerol. It carries out the reaction an N-acylsphing-4-enine + a 1,2-diacyl-sn-glycero-3-phosphoethanolamine = an N-acylsphing-4-enine 1-phosphoethanolamine + a 1,2-diacyl-sn-glycerol. The enzyme catalyses 1,2-dihexadecanoyl-sn-glycero-3-phosphocholine + an N-acylsphing-4-enine = 1,2-dihexadecanoyl-sn-glycerol + a sphingomyelin. The catalysed reaction is 1-(9Z-octadecenoyl)-2-acyl-sn-3-glycerol + a sphingomyelin = a 1-(9Z-octadecenoyl)-2-acyl-sn-glycero-3-phosphocholine + an N-acylsphing-4-enine. It catalyses the reaction N-hexadecanoylsphinganine + a 1,2-diacyl-sn-glycero-3-phosphocholine = N-hexadecanoyl-sphinganine-1-phosphocholine + a 1,2-diacyl-sn-glycerol. It carries out the reaction N-hexadecanoyl-(4R)-hydroxysphinganine + a 1,2-diacyl-sn-glycero-3-phosphocholine = N-hexadecanoyl-(4R)-hydroxysphinganine-phosphocholine + a 1,2-diacyl-sn-glycerol. The enzyme catalyses N-hexadecanoylsphinganine + a 1,2-diacyl-sn-glycero-3-phosphoethanolamine = N-hexadecanoyl-sphinganine-1-phosphoethanolamine + a 1,2-diacyl-sn-glycerol. The catalysed reaction is N-hexadecanoyl-(4R)-hydroxysphinganine + a 1,2-diacyl-sn-glycero-3-phosphoethanolamine = N-hexadecanoyl-(4R)-hydroxysphinganine-1-phosphoethanolamine + a 1,2-diacyl-sn-glycerol. It functions in the pathway sphingolipid metabolism. Inhibited by bacterial PC-phospholipase C inhibitor D609. Functionally, sphingomyelin synthase that primarily contributes to sphingomyelin synthesis and homeostasis at the plasma membrane. Catalyzes the reversible transfer of phosphocholine moiety in sphingomyelin biosynthesis: in the forward reaction transfers phosphocholine head group of phosphatidylcholine (PC) on to ceramide (CER) to form ceramide phosphocholine (sphingomyelin, SM) and diacylglycerol (DAG) as by-product, and in the reverse reaction transfers phosphocholine from SM to DAG to form PC and CER. The direction of the reaction appears to depend on the levels of CER and DAG in the plasma membrane. Does not use free phosphorylcholine or CDP-choline as donors. Can also transfer phosphoethanolamine head group of phosphatidylethanolamine (PE) on to ceramide (CER) to form ceramide phosphoethanolamine (CPE). Regulates receptor-mediated signal transduction via mitogenic DAG and proapoptotic CER, as well as via SM, a structural component of membrane rafts that serve as platforms for signal transduction and protein sorting. To a lesser extent, plays a role in secretory transport via regulation of DAG pool at the Golgi apparatus and its downstream effects on PRKD1. Required for normal bone matrix mineralization. This chain is Phosphatidylcholine:ceramide cholinephosphotransferase 2, found in Homo sapiens (Human).